The following is a 218-amino-acid chain: Ribonuclease HII (218 aa).

Residues 23–216 enclose the RNase H type-2 domain; that stretch reads RFLCGVDEAG…VREAIARGLV (194 aa). The a divalent metal cation site is built by Asp-29, Glu-30, and Asp-125.

This sequence belongs to the RNase HII family. It depends on Mn(2+) as a cofactor. Mg(2+) serves as cofactor.

The protein resides in the cytoplasm. The enzyme catalyses Endonucleolytic cleavage to 5'-phosphomonoester.. In terms of biological role, endonuclease that specifically degrades the RNA of RNA-DNA hybrids. The sequence is that of Ribonuclease HII from Cupriavidus pinatubonensis (strain JMP 134 / LMG 1197) (Cupriavidus necator (strain JMP 134)).